The following is a 129-amino-acid chain: UPF0102 protein Clim_0016 (129 aa).

It belongs to the UPF0102 family.

In Chlorobium limicola (strain DSM 245 / NBRC 103803 / 6330), this protein is UPF0102 protein Clim_0016.